Here is a 349-residue protein sequence, read N- to C-terminus: D-alanine--D-alanine ligase (349 aa).

In terms of domain architecture, ATP-grasp spans 132–335 (KHVFEAVGVP…YSDLIEKLVD (204 aa)). 162 to 217 (VEKLEFPVFVKPANMGSSVGISKVDDLADLQPALSEAYKYDNRVVIEQGVDAREIE) lines the ATP pocket. Asp289, Glu302, and Asn304 together coordinate Mg(2+).

Belongs to the D-alanine--D-alanine ligase family. Mg(2+) serves as cofactor. The cofactor is Mn(2+).

The protein localises to the cytoplasm. It catalyses the reaction 2 D-alanine + ATP = D-alanyl-D-alanine + ADP + phosphate + H(+). It functions in the pathway cell wall biogenesis; peptidoglycan biosynthesis. Functionally, cell wall formation. The chain is D-alanine--D-alanine ligase from Lactococcus lactis subsp. lactis (strain IL1403) (Streptococcus lactis).